The primary structure comprises 470 residues: Sulfate adenylyltransferase subunit 1 (470 aa).

A tr-type G domain is found at 22–238; sequence KELLRFITCG…ETIKIDYAYT (217 aa). Residues 31–38 are G1; it reads GSVDDGKS. Position 31 to 38 (31 to 38) interacts with GTP; that stretch reads GSVDDGKS. The tract at residues 89–93 is G2; sequence GITID. A G3 region spans residues 110 to 113; sequence DTPG. GTP-binding positions include 110–114 and 165–168; these read DTPGH and NKMD. The tract at residues 165-168 is G4; the sequence is NKMD. Residues 202–204 form a G5 region; sequence SAL.

The protein belongs to the TRAFAC class translation factor GTPase superfamily. Classic translation factor GTPase family. CysN/NodQ subfamily. In terms of assembly, heterodimer composed of CysD, the smaller subunit, and CysN.

The enzyme catalyses sulfate + ATP + H(+) = adenosine 5'-phosphosulfate + diphosphate. The protein operates within sulfur metabolism; hydrogen sulfide biosynthesis; sulfite from sulfate: step 1/3. With CysD forms the ATP sulfurylase (ATPS) that catalyzes the adenylation of sulfate producing adenosine 5'-phosphosulfate (APS) and diphosphate, the first enzymatic step in sulfur assimilation pathway. APS synthesis involves the formation of a high-energy phosphoric-sulfuric acid anhydride bond driven by GTP hydrolysis by CysN coupled to ATP hydrolysis by CysD. The chain is Sulfate adenylyltransferase subunit 1 from Francisella tularensis subsp. tularensis (strain WY96-3418).